The primary structure comprises 142 residues: Large ribosomal subunit protein uL13 (142 aa).

It belongs to the universal ribosomal protein uL13 family. In terms of assembly, part of the 50S ribosomal subunit.

Functionally, this protein is one of the early assembly proteins of the 50S ribosomal subunit, although it is not seen to bind rRNA by itself. It is important during the early stages of 50S assembly. The polypeptide is Large ribosomal subunit protein uL13 (Mannheimia succiniciproducens (strain KCTC 0769BP / MBEL55E)).